A 177-amino-acid chain; its full sequence is Large ribosomal subunit protein uL6 (177 aa).

The protein belongs to the universal ribosomal protein uL6 family. As to quaternary structure, part of the 50S ribosomal subunit.

Functionally, this protein binds to the 23S rRNA, and is important in its secondary structure. It is located near the subunit interface in the base of the L7/L12 stalk, and near the tRNA binding site of the peptidyltransferase center. The chain is Large ribosomal subunit protein uL6 from Methylocella silvestris (strain DSM 15510 / CIP 108128 / LMG 27833 / NCIMB 13906 / BL2).